The chain runs to 177 residues: Large ribosomal subunit protein uL6 (177 aa).

It belongs to the universal ribosomal protein uL6 family. Part of the 50S ribosomal subunit.

Its function is as follows. This protein binds to the 23S rRNA, and is important in its secondary structure. It is located near the subunit interface in the base of the L7/L12 stalk, and near the tRNA binding site of the peptidyltransferase center. The protein is Large ribosomal subunit protein uL6 of Bartonella quintana (strain Toulouse) (Rochalimaea quintana).